We begin with the raw amino-acid sequence, 888 residues long: DNA mismatch repair protein MutS (888 aa).

641 to 648 is a binding site for ATP; it reads GPNMAGKS.

It belongs to the DNA mismatch repair MutS family.

Its function is as follows. This protein is involved in the repair of mismatches in DNA. It is possible that it carries out the mismatch recognition step. This protein has a weak ATPase activity. This Rickettsia bellii (strain RML369-C) protein is DNA mismatch repair protein MutS.